The primary structure comprises 325 residues: uncharacterized protein (325 aa).

Coiled-coil stretches lie at residues 38 to 69 (VHVA…QNQS) and 201 to 229 (ANTD…LEFK).

This is an uncharacterized protein from Acanthamoeba polyphaga (Amoeba).